A 262-amino-acid chain; its full sequence is Probable DNA polymerase sliding clamp 1 (262 aa).

A DNA-binding region spans residues lysine 67 to arginine 86.

It belongs to the PCNA family.

Its function is as follows. Sliding clamp subunit. Responsible for tethering the catalytic subunit of DNA polymerase to DNA during high-speed replication. The chain is Probable DNA polymerase sliding clamp 1 from Chlorella (PBCV-1).